The following is a 1088-amino-acid chain: V-type proton ATPase catalytic subunit A (1088 aa).

257-264 (GAFGCGKT) serves as a coordination point for ATP. The DOD-type homing endonuclease domain maps to 485–662 (LLGTWAGIGN…LVKIAHSLGI (178 aa)).

Belongs to the ATPase alpha/beta chains family. V-ATPase is a heteromultimeric enzyme composed of a peripheral catalytic V1 complex (components A to H) attached to an integral membrane V0 proton pore complex (components: a, c, c', c'', d, e, f and VOA1). In terms of processing, this protein undergoes a protein self splicing that involves a post-translational excision of the VDE intervening region (intein) followed by peptide ligation.

It is found in the vacuole membrane. The catalysed reaction is ATP + H2O + 4 H(+)(in) = ADP + phosphate + 5 H(+)(out). Its function is as follows. Catalytic subunit of the V1 complex of vacuolar(H+)-ATPase (V-ATPase), a multisubunit enzyme composed of a peripheral complex (V1) that hydrolyzes ATP and a membrane integral complex (V0) that translocates protons. V-ATPase is responsible for acidifying and maintaining the pH of intracellular compartments. Functionally, VDE is an endonuclease that can cleave at a site present in a VMA1 allele that lacks the derived endonuclease segment of the open reading frame; cleavage at this site only occurs during meiosis and initiates 'homing', a genetic event that converts a VMA1 allele lacking VDE into one that contains it. The protein is V-type proton ATPase catalytic subunit A (VMA1) of Candida tropicalis (Yeast).